The following is a 90-amino-acid chain: Cyclin-dependent kinases regulatory subunit 1 (90 aa).

The protein belongs to the CKS family.

Binds to the catalytic subunit of the cyclin dependent kinases and is essential for their biological function. The sequence is that of Cyclin-dependent kinases regulatory subunit 1 (CKS1) from Oryza sativa subsp. indica (Rice).